The chain runs to 404 residues: MKCPGVSDCVATVRHDNVFAIAAGLRWSAAVPPLHKGDAVTKLLVGAIAGGMLACAAILGDGIASADTALIVPGTAPSPYGPLRSLYHFNPAMQPQIGANYYNPTATRHVVSYPGSFWPVTGLNSPTVGSSVSAGTNNLDAAIRSTDGPIFVAGLSQGTLVLDREQARLANDPTAPPPGQLTFIKAGDPNNLLWRAFRPGTHVPIIDYTVPAPAESQYDTINIVGQYDIFSDPPNRPGNLLADLNAIAAGGYYGHSATAFSDPARVAPRDITTTTNSLGATTTTYFIRTDQLPLVRALVDMAGLPPQAAGTVDAALRPIIDRAYQPGPAPAVNPRDLVQGIRGIPAIAPAIAIPIGSTTGASAATSTAAATAAATNALRGANVGPGANKALSMVRGLLPKGKKH.

At 1–42 the chain is on the periplasmic side; that stretch reads MKCPGVSDCVATVRHDNVFAIAAGLRWSAAVPPLHKGDAVTK. Residues 43 to 63 traverse the membrane as a helical segment; sequence LLVGAIAGGMLACAAILGDGI. Residues 64–404 lie on the Cytoplasmic side of the membrane; it reads ASADTALIVP…RGLLPKGKKH (341 aa). The PE-PPE domain occupies 104-325; it reads PTATRHVVSY…LRPIIDRAYQ (222 aa).

The protein belongs to the mycobacterial PPE family.

It is found in the cell inner membrane. The catalysed reaction is 3 3'-(hydroxy)phthioceranyl-2'-palmitoyl(stearoyl)-2-O-sulfo-alpha,alpha-trehalose = 3,6,6'-tris-(hydroxy)phthioceranyl-2-palmitoyl(stearoyl)-2'-sulfo-alpha-alpha-trehalose + 2 2'-palmitoyl/stearoyl-2-O-sulfo-alpha,alpha-trehalose.. With respect to regulation, activity is potentiated by the SL-1 transporter MmpL8. Inhibited by the lipase inhibitor tetrahydrolipstatin (THL). In terms of biological role, involved in the final steps of the cell wall sulfolipid-1 (SL-1) biosynthesis. Catalyzes two successive acylations of the precursor 2-palmitoyl-3-(C43)-phthioceranyl-alpha, alpha'-D-trehalose-2'-sulfate (SL1278) to yield the tetraacylated sulfolipid SL-1. The protein is SL1278 acyltransferase Chp1 of Mycobacterium tuberculosis (strain ATCC 25618 / H37Rv).